The sequence spans 106 residues: Large ribosomal subunit protein uL24 (106 aa).

This sequence belongs to the universal ribosomal protein uL24 family. As to quaternary structure, part of the 50S ribosomal subunit.

One of two assembly initiator proteins, it binds directly to the 5'-end of the 23S rRNA, where it nucleates assembly of the 50S subunit. Its function is as follows. One of the proteins that surrounds the polypeptide exit tunnel on the outside of the subunit. This is Large ribosomal subunit protein uL24 from Syntrophus aciditrophicus (strain SB).